A 297-amino-acid polypeptide reads, in one-letter code: B-lymphocyte antigen CD20 (297 aa).

Over 1–51 the chain is Cytoplasmic; it reads MTTPRNSMSGTLPVDPMKSPTAMYPVQKIIPKRMPSVVGPTQNFFMRESKT. Ser-36 carries the phosphoserine modification. The chain crosses the membrane as a helical span at residues 52–72; it reads LGAVQIMNGLFHIALGSLLMI. Topologically, residues 73–75 are extracellular; the sequence is HTD. The chain crosses the membrane as a helical span at residues 76-96; sequence VCAPICITMWYPLWGGIMFII. The Cytoplasmic portion of the chain corresponds to 97-122; that stretch reads SGSLLAAADKNPRKSLVKGKMIMNSL. A helical membrane pass occupies residues 123 to 143; the sequence is SLFAAISGIIFLIMDIFNITI. Over 144 to 188 the chain is Extracellular; the sequence is SHFFKMENLNLIKAPMPYVDIHNCDPANPSEKNSLSIQYCGSIRS. A helical transmembrane segment spans residues 189 to 209; sequence VFLGVFAVMLIFAFFQKLVTA. Residues 210–297 lie on the Cytoplasmic side of the membrane; sequence GIVENEWKKL…SSPIENDSIP (88 aa). Cys-220 is lipidated: S-palmitoyl cysteine. Ser-225 carries the phosphoserine modification. A disordered region spans residues 274 to 297; sequence ELEINFAEPPQEQESSPIENDSIP. Residues 281–290 show a composition bias toward low complexity; the sequence is EPPQEQESSP.

It belongs to the MS4A family. Forms homotetramers. Interacts with the heavy and light chains of cell surface IgM, the antigen-binding components of the BCR. In terms of processing, phosphorylated. Might be functionally regulated by protein kinase(s). In terms of tissue distribution, expressed in PBMCs and lymph node from healthy dogs, in B-cells of canine lymphoma, but not in T-cell lymphoma cells and non-T and non-B-cell lymphoma cells.

The protein resides in the cell membrane. In terms of biological role, B-lymphocyte-specific membrane protein that plays a role in the regulation of cellular calcium influx necessary for the development, differentiation, and activation of B-lymphocytes. Functions as a store-operated calcium (SOC) channel component promoting calcium influx after activation by the B-cell receptor/BCR. This Canis lupus familiaris (Dog) protein is B-lymphocyte antigen CD20 (MS4A1).